We begin with the raw amino-acid sequence, 446 residues long: Glucose-6-phosphate isomerase (446 aa).

Glu288 acts as the Proton donor in catalysis. Catalysis depends on residues His309 and Lys423.

The protein belongs to the GPI family.

The protein resides in the cytoplasm. The enzyme catalyses alpha-D-glucose 6-phosphate = beta-D-fructose 6-phosphate. It participates in carbohydrate biosynthesis; gluconeogenesis. It functions in the pathway carbohydrate degradation; glycolysis; D-glyceraldehyde 3-phosphate and glycerone phosphate from D-glucose: step 2/4. Catalyzes the reversible isomerization of glucose-6-phosphate to fructose-6-phosphate. The sequence is that of Glucose-6-phosphate isomerase from Lacticaseibacillus casei (strain BL23) (Lactobacillus casei).